The primary structure comprises 999 residues: Translation initiation factor IF-2 (999 aa).

Positions 50–407 (AFVNNTGSPA…RGQGQTVRLS (358 aa)) are disordered. Pro residues-rich tracts occupy residues 60-89 (PAAP…PPGG) and 96-121 (PMPP…PPQS). Residues 136–162 (VAAAEARAAALKAEQEAAVKAAQAARQ) show a composition bias toward low complexity. Residues 163–173 (QQRDNVRREPP) are compositionally biased toward basic and acidic residues. A compositionally biased stretch (pro residues) spans 179 to 194 (RPGPRPGPGAMPPRPG). Over residues 213–222 (GGRPPARGAG) the composition is skewed to low complexity. The span at 244 to 266 (RPSPASMPPRPSPASMPPRPSPA) shows a compositional bias: pro residues. Residues 275–367 (RPGGPGSGRP…GAAGAFGRPG (93 aa)) are compositionally biased toward gly residues. Residues 371–380 (TRGRKSKKQR) show a composition bias toward basic residues. Residues 388 to 405 (SAPTMSSGAPRGQGQTVR) are compositionally biased toward polar residues. Positions 490 to 662 (SRPPVVTVMG…VLLTADASLE (173 aa)) constitute a tr-type G domain. Positions 499 to 506 (GHVDHGKT) are G1. 499–506 (GHVDHGKT) is a binding site for GTP. The interval 524–528 (GITQH) is G2. The tract at residues 549 to 552 (DTPG) is G3. GTP contacts are provided by residues 549-553 (DTPGH) and 603-606 (NKID). Residues 603-606 (NKID) form a G4 region. The interval 639–641 (AAK) is G5.

The protein belongs to the TRAFAC class translation factor GTPase superfamily. Classic translation factor GTPase family. IF-2 subfamily.

The protein localises to the cytoplasm. Functionally, one of the essential components for the initiation of protein synthesis. Protects formylmethionyl-tRNA from spontaneous hydrolysis and promotes its binding to the 30S ribosomal subunits. Also involved in the hydrolysis of GTP during the formation of the 70S ribosomal complex. This chain is Translation initiation factor IF-2, found in Salinispora tropica (strain ATCC BAA-916 / DSM 44818 / JCM 13857 / NBRC 105044 / CNB-440).